A 448-amino-acid polypeptide reads, in one-letter code: Trigger factor (448 aa).

Residues Gly-167–Pro-253 enclose the PPIase FKBP-type domain.

It belongs to the FKBP-type PPIase family. Tig subfamily.

The protein localises to the cytoplasm. The catalysed reaction is [protein]-peptidylproline (omega=180) = [protein]-peptidylproline (omega=0). Involved in protein export. Acts as a chaperone by maintaining the newly synthesized protein in an open conformation. Functions as a peptidyl-prolyl cis-trans isomerase. In Borrelia hermsii (strain HS1 / DAH), this protein is Trigger factor.